The chain runs to 904 residues: Protein translocase subunit SecA (904 aa).

ATP-binding positions include Gln89, 107–111 (GEGKT), and Asp496. A disordered region spans residues 870–904 (GGFQELSSGTPSPTVTVTTSSGGGTERKTSRRRKR). Low complexity predominate over residues 876-889 (SSGTPSPTVTVTTS).

It belongs to the SecA family. As to quaternary structure, monomer and homodimer. Part of the essential Sec protein translocation apparatus which comprises SecA, SecYEG and auxiliary proteins SecDF. Other proteins may also be involved.

The protein resides in the cell inner membrane. Its subcellular location is the cytoplasm. The catalysed reaction is ATP + H2O + cellular proteinSide 1 = ADP + phosphate + cellular proteinSide 2.. Part of the Sec protein translocase complex. Interacts with the SecYEG preprotein conducting channel. Has a central role in coupling the hydrolysis of ATP to the transfer of proteins into and across the cell membrane, serving as an ATP-driven molecular motor driving the stepwise translocation of polypeptide chains across the membrane. The chain is Protein translocase subunit SecA from Leptospira borgpetersenii serovar Hardjo-bovis (strain L550).